The primary structure comprises 718 residues: Ribosome-releasing factor 2, mitochondrial (718 aa).

The transit peptide at 1–29 (MLKCAWQNGPRQSNRWLWQLSNQIWKRSY) directs the protein to the mitochondrion. One can recognise a tr-type G domain in the interval 31-310 (SKIRNIGILA…AVNSYLPAPE (280 aa)). GTP is bound by residues 40–47 (AHIDAGKT), 104–108 (DTPGH), and 158–161 (NKMD).

It belongs to the TRAFAC class translation factor GTPase superfamily. Classic translation factor GTPase family. EF-G/EF-2 subfamily.

It localises to the mitochondrion. In terms of biological role, mitochondrial GTPase that mediates the disassembly of ribosomes from messenger RNA at the termination of mitochondrial protein biosynthesis. Not involved in the GTP-dependent ribosomal translocation step during translation elongation. The protein is Ribosome-releasing factor 2, mitochondrial of Drosophila erecta (Fruit fly).